Here is a 954-residue protein sequence, read N- to C-terminus: Valine--tRNA ligase (954 aa).

Positions 48–58 (PNVTGSLHMGH) match the 'HIGH' region motif. Residues 560 to 564 (KMSKS) carry the 'KMSKS' region motif. K563 serves as a coordination point for ATP. The stretch at 886–954 (INKDTELARL…RAQYLSIENL (69 aa)) forms a coiled coil.

The protein belongs to the class-I aminoacyl-tRNA synthetase family. ValS type 1 subfamily. As to quaternary structure, monomer.

It localises to the cytoplasm. The enzyme catalyses tRNA(Val) + L-valine + ATP = L-valyl-tRNA(Val) + AMP + diphosphate. In terms of biological role, catalyzes the attachment of valine to tRNA(Val). As ValRS can inadvertently accommodate and process structurally similar amino acids such as threonine, to avoid such errors, it has a 'posttransfer' editing activity that hydrolyzes mischarged Thr-tRNA(Val) in a tRNA-dependent manner. The chain is Valine--tRNA ligase from Mannheimia succiniciproducens (strain KCTC 0769BP / MBEL55E).